A 339-amino-acid chain; its full sequence is Anthranilate phosphoribosyltransferase (339 aa).

5-phospho-alpha-D-ribose 1-diphosphate contacts are provided by residues glycine 80, 83–84 (GD), threonine 88, 90–93 (NIST), 108–116 (KHGNRSVSS), and serine 120. Residue glycine 80 coordinates anthranilate. A Mg(2+)-binding site is contributed by serine 92. Asparagine 111 serves as a coordination point for anthranilate. Arginine 166 contributes to the anthranilate binding site. Positions 225 and 226 each coordinate Mg(2+).

This sequence belongs to the anthranilate phosphoribosyltransferase family. In terms of assembly, homodimer. Mg(2+) serves as cofactor.

The enzyme catalyses N-(5-phospho-beta-D-ribosyl)anthranilate + diphosphate = 5-phospho-alpha-D-ribose 1-diphosphate + anthranilate. It participates in amino-acid biosynthesis; L-tryptophan biosynthesis; L-tryptophan from chorismate: step 2/5. Catalyzes the transfer of the phosphoribosyl group of 5-phosphorylribose-1-pyrophosphate (PRPP) to anthranilate to yield N-(5'-phosphoribosyl)-anthranilate (PRA). In Desulfosudis oleivorans (strain DSM 6200 / JCM 39069 / Hxd3) (Desulfococcus oleovorans), this protein is Anthranilate phosphoribosyltransferase.